A 162-amino-acid polypeptide reads, in one-letter code: Urease subunit beta (162 aa).

The tract at residues 116-162 (WRRSSAAGDAPQELPQVEAAERGRKLDDATDVDTNVGTEEGFEEGRN) is disordered. Residues 134–143 (AAERGRKLDD) show a composition bias toward basic and acidic residues.

The protein belongs to the urease beta subunit family. Heterotrimer of UreA (gamma), UreB (beta) and UreC (alpha) subunits. Three heterotrimers associate to form the active enzyme.

Its subcellular location is the cytoplasm. The catalysed reaction is urea + 2 H2O + H(+) = hydrogencarbonate + 2 NH4(+). It functions in the pathway nitrogen metabolism; urea degradation; CO(2) and NH(3) from urea (urease route): step 1/1. The protein is Urease subunit beta of Corynebacterium glutamicum (strain ATCC 13032 / DSM 20300 / JCM 1318 / BCRC 11384 / CCUG 27702 / LMG 3730 / NBRC 12168 / NCIMB 10025 / NRRL B-2784 / 534).